A 339-amino-acid chain; its full sequence is N-acetyl-gamma-glutamyl-phosphate reductase (339 aa).

The active site involves Cys-145.

This sequence belongs to the NAGSA dehydrogenase family. Type 1 subfamily.

It is found in the cytoplasm. The catalysed reaction is N-acetyl-L-glutamate 5-semialdehyde + phosphate + NADP(+) = N-acetyl-L-glutamyl 5-phosphate + NADPH + H(+). It functions in the pathway amino-acid biosynthesis; L-arginine biosynthesis; N(2)-acetyl-L-ornithine from L-glutamate: step 3/4. In terms of biological role, catalyzes the NADPH-dependent reduction of N-acetyl-5-glutamyl phosphate to yield N-acetyl-L-glutamate 5-semialdehyde. The chain is N-acetyl-gamma-glutamyl-phosphate reductase from Thermotoga petrophila (strain ATCC BAA-488 / DSM 13995 / JCM 10881 / RKU-1).